Here is a 454-residue protein sequence, read N- to C-terminus: tRNA modification GTPase MnmE (454 aa).

The (6S)-5-formyl-5,6,7,8-tetrahydrofolate site is built by Arg-23, Glu-86, and Arg-125. Residues 221–376 (GLTLAIVGRP…LREQILRMVS (156 aa)) form the TrmE-type G domain. Asn-231 serves as a coordination point for K(+). GTP is bound by residues 231 to 236 (NVGKSS), 250 to 256 (TAIPGTT), and 275 to 278 (DTAG). Ser-235 serves as a coordination point for Mg(2+). Thr-250, Ile-252, and Thr-255 together coordinate K(+). Thr-256 contributes to the Mg(2+) binding site. (6S)-5-formyl-5,6,7,8-tetrahydrofolate is bound at residue Lys-454.

Belongs to the TRAFAC class TrmE-Era-EngA-EngB-Septin-like GTPase superfamily. TrmE GTPase family. In terms of assembly, homodimer. Heterotetramer of two MnmE and two MnmG subunits. It depends on K(+) as a cofactor.

The protein resides in the cytoplasm. Its function is as follows. Exhibits a very high intrinsic GTPase hydrolysis rate. Involved in the addition of a carboxymethylaminomethyl (cmnm) group at the wobble position (U34) of certain tRNAs, forming tRNA-cmnm(5)s(2)U34. The sequence is that of tRNA modification GTPase MnmE from Koribacter versatilis (strain Ellin345).